Here is a 373-residue protein sequence, read N- to C-terminus: MVSARLRKTDLVVDLKALGANVQRQREQLAPGSRILAVVKANAYGNGMVPVASALARAGVEGFCVALLDEAIELRDSGIQELVLVLGITPVEYAPLAAAQGISLTVGSLEWLKNYQRLAKEEGIKQPLKVHLALDTGMGRIGFTTPEDFKEALQLVAAPCFEFEGIFTHFATADEEDATYFERQRARFDDFMAVVTKRPPFVHVANSATGLWHQKSIVANTIRMGISMYGANPSGVGIKESFPLEPVTSLVTHATYVKQLKAGESVSYGATYTAKEDEWVATLPVGYADGYPRRMQGFYVLVDGQRCEVLGRVCMDQMMVRLPKEYPVGTEAVLMGRSLDQEITVTDVAEYAHTINYEILTGMGARLHRRYLG.

Lys-40 serves as the catalytic Proton acceptor; specific for D-alanine. Lys-40 carries the post-translational modification N6-(pyridoxal phosphate)lysine. Substrate is bound at residue Arg-140. Residue Tyr-268 is the Proton acceptor; specific for L-alanine of the active site. Met-315 provides a ligand contact to substrate.

Belongs to the alanine racemase family. The cofactor is pyridoxal 5'-phosphate.

The enzyme catalyses L-alanine = D-alanine. Its pathway is amino-acid biosynthesis; D-alanine biosynthesis; D-alanine from L-alanine: step 1/1. Catalyzes the interconversion of L-alanine and D-alanine. May also act on other amino acids. In Limosilactobacillus fermentum (strain NBRC 3956 / LMG 18251) (Lactobacillus fermentum), this protein is Alanine racemase (alr).